A 213-amino-acid polypeptide reads, in one-letter code: Endoplasmic reticulum vesicle protein 25 (213 aa).

The N-terminal stretch at 1-20 (MILRIPSLLYLFTLLTAVYA) is a signal peptide. Over 21-181 (VKFDLTSDRN…TNESTNQRVK (161 aa)) the chain is Lumenal. A GOLD domain is found at 33–122 (PSIIWNFASA…VRSVELDVDI (90 aa)). A helical membrane pass occupies residues 182-202 (VFSVLIICCTIGLGVWQLLHL). The Cytoplasmic segment spans residues 203 to 213 (RSFFKRKYLID).

The protein belongs to the EMP24/GP25L family.

The protein localises to the endoplasmic reticulum membrane. It is found in the golgi apparatus membrane. In terms of biological role, constituent of COPII-coated endoplasmic reticulum-derived transport vesicles. Required for efficient transport of a subset of secretory proteins to the Golgi. Facilitates retrograde transport from the Golgi to the endoplasmic reticulum. The sequence is that of Endoplasmic reticulum vesicle protein 25 (ERV25) from Cryptococcus neoformans var. neoformans serotype D (strain B-3501A) (Filobasidiella neoformans).